The chain runs to 167 residues: Small ribosomal subunit protein uS5 (167 aa).

The S5 DRBM domain occupies leucine 12 to isoleucine 75.

Belongs to the universal ribosomal protein uS5 family. As to quaternary structure, part of the 30S ribosomal subunit. Contacts proteins S4 and S8.

In terms of biological role, with S4 and S12 plays an important role in translational accuracy. Its function is as follows. Located at the back of the 30S subunit body where it stabilizes the conformation of the head with respect to the body. This is Small ribosomal subunit protein uS5 from Vibrio vulnificus (strain CMCP6).